The primary structure comprises 148 residues: MNLSNLKPAEGSTKTRKRIGRGAGSGLGGTSTRGHKGAKSRSGYSKKVGFEGGQMPLQRRVPKFGFKNINRVEYKAINLDTIQTLADAKNLTKVGISDFIEAGFISSNQLVKVLGNGALTNKLEVEANAFSKSAAAAIEAAGGTVVKL.

Positions 1-51 (MNLSNLKPAEGSTKTRKRIGRGAGSGLGGTSTRGHKGAKSRSGYSKKVGFE) are disordered. Gly residues predominate over residues 21–31 (RGAGSGLGGTS).

This sequence belongs to the universal ribosomal protein uL15 family. In terms of assembly, part of the 50S ribosomal subunit.

Binds to the 23S rRNA. This chain is Large ribosomal subunit protein uL15, found in Bacteroides thetaiotaomicron (strain ATCC 29148 / DSM 2079 / JCM 5827 / CCUG 10774 / NCTC 10582 / VPI-5482 / E50).